The primary structure comprises 651 residues: Threonine--tRNA ligase (651 aa).

A TGS domain is found at 1 to 64 (MSSVVHVTLP…EKDCTLQVLT (64 aa)). A catalytic region spans residues 245-535 (DHRRLGPELG…LTEHYAGNFP (291 aa)). Zn(2+) contacts are provided by C336, H387, and H512.

Belongs to the class-II aminoacyl-tRNA synthetase family. In terms of assembly, homodimer. The cofactor is Zn(2+).

Its subcellular location is the cytoplasm. The catalysed reaction is tRNA(Thr) + L-threonine + ATP = L-threonyl-tRNA(Thr) + AMP + diphosphate + H(+). Functionally, catalyzes the attachment of threonine to tRNA(Thr) in a two-step reaction: L-threonine is first activated by ATP to form Thr-AMP and then transferred to the acceptor end of tRNA(Thr). Also edits incorrectly charged L-seryl-tRNA(Thr). This chain is Threonine--tRNA ligase, found in Symbiobacterium thermophilum (strain DSM 24528 / JCM 14929 / IAM 14863 / T).